The primary structure comprises 60 residues: Large ribosomal subunit protein bL32 (60 aa).

Belongs to the bacterial ribosomal protein bL32 family.

The chain is Large ribosomal subunit protein bL32 from Thermosipho melanesiensis (strain DSM 12029 / CIP 104789 / BI429).